A 385-amino-acid polypeptide reads, in one-letter code: UDP-N-acetylglucosamine--N-acetylmuramyl-(pentapeptide) pyrophosphoryl-undecaprenol N-acetylglucosamine transferase (385 aa).

Residues 11–13 (TGG), Asn-117, Arg-160, Ser-215, and Gln-317 contribute to the UDP-N-acetyl-alpha-D-glucosamine site.

This sequence belongs to the glycosyltransferase 28 family. MurG subfamily.

It is found in the cell inner membrane. It catalyses the reaction di-trans,octa-cis-undecaprenyl diphospho-N-acetyl-alpha-D-muramoyl-L-alanyl-D-glutamyl-meso-2,6-diaminopimeloyl-D-alanyl-D-alanine + UDP-N-acetyl-alpha-D-glucosamine = di-trans,octa-cis-undecaprenyl diphospho-[N-acetyl-alpha-D-glucosaminyl-(1-&gt;4)]-N-acetyl-alpha-D-muramoyl-L-alanyl-D-glutamyl-meso-2,6-diaminopimeloyl-D-alanyl-D-alanine + UDP + H(+). It participates in cell wall biogenesis; peptidoglycan biosynthesis. Functionally, cell wall formation. Catalyzes the transfer of a GlcNAc subunit on undecaprenyl-pyrophosphoryl-MurNAc-pentapeptide (lipid intermediate I) to form undecaprenyl-pyrophosphoryl-MurNAc-(pentapeptide)GlcNAc (lipid intermediate II). This chain is UDP-N-acetylglucosamine--N-acetylmuramyl-(pentapeptide) pyrophosphoryl-undecaprenol N-acetylglucosamine transferase, found in Rickettsia prowazekii (strain Madrid E).